Here is a 271-residue protein sequence, read N- to C-terminus: Formamidopyrimidine-DNA glycosylase (271 aa).

P2 acts as the Schiff-base intermediate with DNA in catalysis. E3 functions as the Proton donor in the catalytic mechanism. K58 functions as the Proton donor; for beta-elimination activity in the catalytic mechanism. Positions 90, 108, and 151 each coordinate DNA. The segment at 236–271 (QVYGRDGQPCHRDDGGTIRRFAQGGRSTWYCPRCQR) adopts an FPG-type; degenerate zinc-finger fold. The active-site Proton donor; for delta-elimination activity is R261.

The protein belongs to the FPG family. Monomer. The cofactor is Zn(2+).

The catalysed reaction is Hydrolysis of DNA containing ring-opened 7-methylguanine residues, releasing 2,6-diamino-4-hydroxy-5-(N-methyl)formamidopyrimidine.. The enzyme catalyses 2'-deoxyribonucleotide-(2'-deoxyribose 5'-phosphate)-2'-deoxyribonucleotide-DNA = a 3'-end 2'-deoxyribonucleotide-(2,3-dehydro-2,3-deoxyribose 5'-phosphate)-DNA + a 5'-end 5'-phospho-2'-deoxyribonucleoside-DNA + H(+). Involved in base excision repair of DNA damaged by oxidation or by mutagenic agents. Acts as a DNA glycosylase that recognizes and removes damaged bases. Has a preference for oxidized purines, such as 7,8-dihydro-8-oxoguanine (8-oxoG). Has AP (apurinic/apyrimidinic) lyase activity and introduces nicks in the DNA strand. Cleaves the DNA backbone by beta-delta elimination to generate a single-strand break at the site of the removed base with both 3'- and 5'-phosphates. This Erythrobacter litoralis (strain HTCC2594) protein is Formamidopyrimidine-DNA glycosylase.